A 434-amino-acid polypeptide reads, in one-letter code: Trigger factor (434 aa).

The region spanning 161–246 (GKRVSIDFVG…VNKVEARELP (86 aa)) is the PPIase FKBP-type domain.

Belongs to the FKBP-type PPIase family. Tig subfamily.

Its subcellular location is the cytoplasm. The catalysed reaction is [protein]-peptidylproline (omega=180) = [protein]-peptidylproline (omega=0). Its function is as follows. Involved in protein export. Acts as a chaperone by maintaining the newly synthesized protein in an open conformation. Functions as a peptidyl-prolyl cis-trans isomerase. The polypeptide is Trigger factor (Vibrio parahaemolyticus serotype O3:K6 (strain RIMD 2210633)).